An 86-amino-acid polypeptide reads, in one-letter code: Putative membrane protein insertion efficiency factor (86 aa).

The disordered stretch occupies residues 66-86 (AGGHDPVPPVPPQRYPSAQEH).

The protein belongs to the UPF0161 family.

It localises to the cell inner membrane. Its function is as follows. Could be involved in insertion of integral membrane proteins into the membrane. The sequence is that of Putative membrane protein insertion efficiency factor from Nitratidesulfovibrio vulgaris (strain ATCC 29579 / DSM 644 / CCUG 34227 / NCIMB 8303 / VKM B-1760 / Hildenborough) (Desulfovibrio vulgaris).